We begin with the raw amino-acid sequence, 289 residues long: Acetyl-coenzyme A carboxylase carboxyl transferase subunit beta (289 aa).

The region spanning 28 to 289 (VMTKCPKCKK…QGGEMAVWQS (262 aa)) is the CoA carboxyltransferase N-terminal domain. Zn(2+) is bound by residues cysteine 32, cysteine 35, cysteine 51, and cysteine 54. A C4-type zinc finger spans residues 32 to 54 (CPKCKKIMYTKELLKNLKVCVNC).

This sequence belongs to the AccD/PCCB family. As to quaternary structure, acetyl-CoA carboxylase is a heterohexamer composed of biotin carboxyl carrier protein (AccB), biotin carboxylase (AccC) and two subunits each of ACCase subunit alpha (AccA) and ACCase subunit beta (AccD). The cofactor is Zn(2+).

Its subcellular location is the cytoplasm. It carries out the reaction N(6)-carboxybiotinyl-L-lysyl-[protein] + acetyl-CoA = N(6)-biotinyl-L-lysyl-[protein] + malonyl-CoA. Its pathway is lipid metabolism; malonyl-CoA biosynthesis; malonyl-CoA from acetyl-CoA: step 1/1. In terms of biological role, component of the acetyl coenzyme A carboxylase (ACC) complex. Biotin carboxylase (BC) catalyzes the carboxylation of biotin on its carrier protein (BCCP) and then the CO(2) group is transferred by the transcarboxylase to acetyl-CoA to form malonyl-CoA. The chain is Acetyl-coenzyme A carboxylase carboxyl transferase subunit beta from Bacillus cereus (strain ATCC 10987 / NRS 248).